The primary structure comprises 152 residues: SsrA-binding protein (152 aa).

It belongs to the SmpB family.

It localises to the cytoplasm. Functionally, required for rescue of stalled ribosomes mediated by trans-translation. Binds to transfer-messenger RNA (tmRNA), required for stable association of tmRNA with ribosomes. tmRNA and SmpB together mimic tRNA shape, replacing the anticodon stem-loop with SmpB. tmRNA is encoded by the ssrA gene; the 2 termini fold to resemble tRNA(Ala) and it encodes a 'tag peptide', a short internal open reading frame. During trans-translation Ala-aminoacylated tmRNA acts like a tRNA, entering the A-site of stalled ribosomes, displacing the stalled mRNA. The ribosome then switches to translate the ORF on the tmRNA; the nascent peptide is terminated with the 'tag peptide' encoded by the tmRNA and targeted for degradation. The ribosome is freed to recommence translation, which seems to be the essential function of trans-translation. The chain is SsrA-binding protein from Rickettsia montanensis.